A 2376-amino-acid polypeptide reads, in one-letter code: MAG2-interacting protein 2 (2376 aa).

In terms of assembly, forms a complex with MAG2, ZW10/MIP1 and MIP3 on the endoplasmic reticulum.

The protein localises to the endoplasmic reticulum membrane. Required for proper maturation of seed storage proteins. Forms a complex with MAG2, ZW10/MIP1 and MIP3 on the endoplasmic reticulum that may be responsible for efficient transport of seed storage proteins. The polypeptide is MAG2-interacting protein 2 (Arabidopsis thaliana (Mouse-ear cress)).